Here is a 252-residue protein sequence, read N- to C-terminus: Chitooligosaccharide deacetylase (252 aa).

Residues H61 and H125 each contribute to the Mg(2+) site.

This sequence belongs to the YdjC deacetylase family. ChbG subfamily. Homodimer. Mg(2+) is required as a cofactor.

Its subcellular location is the cytoplasm. It carries out the reaction N,N'-diacetylchitobiose + H2O = N-acetyl-beta-D-glucosaminyl-(1-&gt;4)-D-glucosamine + acetate. The enzyme catalyses diacetylchitobiose-6'-phosphate + H2O = N'-monoacetylchitobiose-6'-phosphate + acetate. Its pathway is glycan degradation; chitin degradation. Involved in the degradation of chitin. ChbG is essential for growth on the acetylated chitooligosaccharides chitobiose and chitotriose but is dispensable for growth on cellobiose and chitosan dimer, the deacetylated form of chitobiose. Deacetylation of chitobiose-6-P and chitotriose-6-P is necessary for both the activation of the chb promoter by the regulatory protein ChbR and the hydrolysis of phosphorylated beta-glucosides by the phospho-beta-glucosidase ChbF. Catalyzes the removal of only one acetyl group from chitobiose-6-P to yield monoacetylchitobiose-6-P, the inducer of ChbR and the substrate of ChbF. The sequence is that of Chitooligosaccharide deacetylase from Klebsiella pneumoniae (strain 342).